The sequence spans 421 residues: 4-methylaminobutanoate oxidase (methylamine-forming) (421 aa).

FAD-binding residues include Glu31, Arg33, Arg39, and Glu379.

This sequence belongs to the flavin monoamine oxidase family. Monomer. The cofactor is FAD.

The catalysed reaction is 4-(methylamino)butanoate + O2 + H2O = succinate semialdehyde + methylamine + H2O2. Its pathway is alkaloid degradation; nicotine degradation. Functionally, catalyzes the removal of methylamine from 4-methylaminobutanoate with the formation of succinate semialdehyde. Is involved in the catabolism of 4-methylaminobutanoate produced from nicotine. Has a very weak monoamine oxidase activity with 4-aminobutanoate. Cannot use spermidine, spermine, sarcosine, dimethylglycine, glycine, choline, betaine, alpha-methylamino isobutyrate, methylamine propionitrile and methylamino propylamine as substrate. This chain is 4-methylaminobutanoate oxidase (methylamine-forming) (mao), found in Paenarthrobacter nicotinovorans (Arthrobacter nicotinovorans).